The primary structure comprises 331 residues: MEENEYSGYWEPPRKRCCCARRGTQLMLVGLLSTAMWAGLLALLLLWHWETEKNLKQLGDTAIQNVSHVTKDLQKFQSNQLAQKSQVVQMSQNLQELQAEQKQMKAQDSRLSQNLTGLQEDLRNAQSQNSKLSQNLNRLQDDLVNIKSLGLNEKRTASDSLEKLQEEVAKLWIEILISKGTACNICPKNWLHFQQKCYYFGKGSKQWIQARFACSDLQGRLVSIHSQKEQDFLMQHINKKDSWIGLQDLNMEGEFVWSDGSPVGYSNWNPGEPNNGGQGEDCVMMRGSGQWNDAFCRSYLDAWVCEQLATCEISAPLASVTPTRPTPKSEP.

Residues 1 to 23 (MEENEYSGYWEPPRKRCCCARRG) lie on the Cytoplasmic side of the membrane. 2 S-palmitoyl cysteine lipidation sites follow: Cys17 and Cys18. Residues 24 to 49 (TQLMLVGLLSTAMWAGLLALLLLWHW) traverse the membrane as a helical; Signal-anchor for type II membrane protein segment. The Extracellular portion of the chain corresponds to 50–331 (ETEKNLKQLG…PTRPTPKSEP (282 aa)). A glycan (N-linked (GlcNAc...) asparagine) is linked at Asn65. 3 consecutive repeats follow at residues 71 to 91 (KDLQKFQSNQLAQKSQVVQMS), 92 to 112 (QNLQELQAEQKQMKAQDSRLS), and 113 to 133 (QNLTGLQEDLRNAQSQNSKLS). A glycan (N-linked (GlcNAc...) asparagine) is linked at Asn114. Intrachain disulfides connect Cys183–Cys311, Cys186–Cys197, Cys214–Cys305, and Cys282–Cys296. The 114-residue stretch at 185–298 (ICPKNWLHFQ…GQWNDAFCRS (114 aa)) folds into the C-type lectin domain. Ca(2+) is bound by residues Glu272, Asn292, and Asp293. Ser319 carries O-linked (Xyl...) (chondroitin sulfate) serine glycosylation.

As to quaternary structure, homotrimer. Interacts (via C-type lectin domain) with IGHE (via CH3 region); this interaction regulates IgE homeostasis. Interacts (via C-terminus) with CR2/CD21 (via Sushi domain 1 and 2). N- and O-glycosylated.

The protein localises to the cell membrane. Its subcellular location is the secreted. Its function is as follows. Low-affinity receptor for immunoglobulin E (IgE) and CR2/CD21. Has essential roles in the regulation of IgE production and in the differentiation of B cells. On B cells, initiates IgE-dependent antigen uptake and presentation to T cells. On macrophages, upon IgE binding and antigen cross-linking induces intracellular killing of parasites through activation of L-Arginine-nitric oxide pathway. This Mus musculus (Mouse) protein is Low affinity immunoglobulin epsilon Fc receptor (Fcer2).